Here is a 386-residue protein sequence, read N- to C-terminus: Antilisterial bacteriocin subtilosin biosynthesis protein AlbE (386 aa).

Functionally, involved in the production of the bacteriocin subtilosin. This chain is Antilisterial bacteriocin subtilosin biosynthesis protein AlbE (albE), found in Bacillus subtilis.